A 510-amino-acid polypeptide reads, in one-letter code: Abscisic acid 8'-hydroxylase 2 (510 aa).

Residues 3-23 form a helical membrane-spanning segment; the sequence is FLLFFVFVTAAVLCFVVPAFL. Heme is bound at residue C441.

This sequence belongs to the cytochrome P450 family. Heme serves as cofactor.

The protein localises to the membrane. The catalysed reaction is 2-cis-(+)-abscisate + reduced [NADPH--hemoprotein reductase] + O2 = (+)-8'-hydroxyabscisate + oxidized [NADPH--hemoprotein reductase] + H2O + H(+). It functions in the pathway plant hormone degradation; abscisic acid degradation. Functionally, involved in the oxidative degradation of abscisic acid. The protein is Abscisic acid 8'-hydroxylase 2 (CYP707A6) of Oryza sativa subsp. japonica (Rice).